A 273-amino-acid polypeptide reads, in one-letter code: Oxidation resistance protein 1 (273 aa).

Met1 bears the N-acetylmethionine mark. Residues 18-33 (TDSSDSTAYTTASESS) show a composition bias toward low complexity. 2 disordered regions span residues 18 to 48 (TDSSDSTAYTTASESSPQLKDSHNPFRNKTT) and 177 to 197 (ISEKEESEQEGKEGKEEGDKE). Residues 37–48 (KDSHNPFRNKTT) are compositionally biased toward basic and acidic residues. One can recognise a TLDc domain in the interval 74–273 (KLLTPEMCDE…IVALEVWRVG (200 aa)). Ser178 carries the post-translational modification Phosphoserine.

Belongs to the OXR1 family.

Its subcellular location is the mitochondrion. Its function is as follows. Involved in protection from oxidative damage. The sequence is that of Oxidation resistance protein 1 (OXR1) from Saccharomyces cerevisiae (strain ATCC 204508 / S288c) (Baker's yeast).